Reading from the N-terminus, the 592-residue chain is Aspartate--tRNA ligase (592 aa).

L-aspartate is bound at residue Glu-171. The segment at Gln-195–Lys-198 is aspartate. Position 217 (Arg-217) interacts with L-aspartate. Residues Arg-217 to Glu-219 and Gln-226 contribute to the ATP site. Residue His-448 coordinates L-aspartate. Glu-482 contributes to the ATP binding site. Arg-489 provides a ligand contact to L-aspartate. ATP is bound at residue Gly-534–Arg-537.

The protein belongs to the class-II aminoacyl-tRNA synthetase family. Type 1 subfamily. Homodimer.

It is found in the cytoplasm. It carries out the reaction tRNA(Asp) + L-aspartate + ATP = L-aspartyl-tRNA(Asp) + AMP + diphosphate. Functionally, catalyzes the attachment of L-aspartate to tRNA(Asp) in a two-step reaction: L-aspartate is first activated by ATP to form Asp-AMP and then transferred to the acceptor end of tRNA(Asp). The sequence is that of Aspartate--tRNA ligase from Vibrio campbellii (strain ATCC BAA-1116).